Reading from the N-terminus, the 277-residue chain is tRNA pseudouridine synthase B (277 aa).

The active-site Nucleophile is aspartate 38.

Belongs to the pseudouridine synthase TruB family. Type 1 subfamily.

It catalyses the reaction uridine(55) in tRNA = pseudouridine(55) in tRNA. Functionally, responsible for synthesis of pseudouridine from uracil-55 in the psi GC loop of transfer RNAs. In Sulfurovum sp. (strain NBC37-1), this protein is tRNA pseudouridine synthase B.